Reading from the N-terminus, the 132-residue chain is Chaperone protein SycT (132 aa).

As to quaternary structure, binds to YopT.

Its function is as follows. Functions as a specific chaperone for YopT. This is Chaperone protein SycT (sycT) from Yersinia pestis.